Here is a 156-residue protein sequence, read N- to C-terminus: Large ribosomal subunit protein eL24 (156 aa).

Residues 110–123 (RAAKEKQKQKELEK) show a composition bias toward basic and acidic residues. The interval 110–156 (RAAKEKQKQKELEKKAKKVEKKKPTLAPKQKAAKITQKPAPRVGGKR) is disordered.

This sequence belongs to the eukaryotic ribosomal protein eL24 family.

The polypeptide is Large ribosomal subunit protein eL24 (RPL24) (Schistosoma japonicum (Blood fluke)).